The primary structure comprises 704 residues: Tetratricopeptide repeat protein 12 (704 aa).

At Thr71 the chain carries Phosphothreonine. TPR repeat units lie at residues 105-138 (ADAL…LKDM), 139-172 (KVLY…DENC), and 173-206 (TKAY…NPKL).

The protein resides in the cytoplasm. Functionally, cytoplasmic protein that plays a role in the proper assembly of dynein arm complexes in motile cilia in both respiratory cells and sperm flagella. The polypeptide is Tetratricopeptide repeat protein 12 (Ttc12) (Mus musculus (Mouse)).